Reading from the N-terminus, the 612-residue chain is C4-dicarboxylate transport sensor protein DctB (612 aa).

2 helical membrane-spanning segments follow: residues 23-43 (SLVI…YFAE) and 292-312 (VLLI…LLTL). Residues 328 to 376 (KRQLEERVLERTRELENANAQLQQEVHEREQAQRELMRAQDEVVQAGKL) are a coiled coil. In terms of domain architecture, Histidine kinase spans 385–599 (SISHELNQPL…VVRLHLLPGV (215 aa)). H388 carries the post-translational modification Phosphohistidine; by autocatalysis.

Autophosphorylated.

Its subcellular location is the cell inner membrane. It catalyses the reaction ATP + protein L-histidine = ADP + protein N-phospho-L-histidine.. Member of the two-component regulatory system DctB/DctD, which regulates C4-dicarboxylate transport via regulation of expression of the dctPQM operon and dctA. DctB functions as a membrane-associated protein kinase that phosphorylates DctD in response to environmental signals. This Pseudomonas aeruginosa (strain ATCC 15692 / DSM 22644 / CIP 104116 / JCM 14847 / LMG 12228 / 1C / PRS 101 / PAO1) protein is C4-dicarboxylate transport sensor protein DctB.